The sequence spans 37 residues: Large ribosomal subunit protein bL36 (37 aa).

The protein belongs to the bacterial ribosomal protein bL36 family.

This Desulforamulus reducens (strain ATCC BAA-1160 / DSM 100696 / MI-1) (Desulfotomaculum reducens) protein is Large ribosomal subunit protein bL36.